We begin with the raw amino-acid sequence, 433 residues long: Serine/threonine-protein phosphatase 2A activator 2 (433 aa).

Over residues 1 to 10 (MTSQAPPQPA) the composition is skewed to pro residues. 2 disordered regions span residues 1-67 (MTSQ…NWTF) and 367-400 (SMSEDTGAGDEADVEDDPHAGHDHTGKAHDGTGW). Positions 11-23 (SSPGVAAPAAASS) are enriched in low complexity. Pro residues predominate over residues 45–59 (NPTPIPETPALPTPP). The span at 367–382 (SMSEDTGAGDEADVED) shows a compositional bias: acidic residues. Positions 383–396 (DPHAGHDHTGKAHD) are enriched in basic and acidic residues.

This sequence belongs to the PTPA-type PPIase family.

It is found in the cytoplasm. It carries out the reaction [protein]-peptidylproline (omega=180) = [protein]-peptidylproline (omega=0). In terms of biological role, PPIases accelerate the folding of proteins. It catalyzes the cis-trans isomerization of proline imidic peptide bonds in oligopeptides. Acts as a regulatory subunit for PP2A-like phosphatases modulating their activity or substrate specificity, probably by inducing a conformational change in the catalytic subunit, a direct target of the PPIase. Can reactivate inactive phosphatase PP2A-phosphatase methylesterase complexes (PP2Ai) in presence of ATP and Mg(2+) by dissociating the inactive form from the complex. This Gibberella zeae (strain ATCC MYA-4620 / CBS 123657 / FGSC 9075 / NRRL 31084 / PH-1) (Wheat head blight fungus) protein is Serine/threonine-protein phosphatase 2A activator 2 (RRD2).